A 624-amino-acid chain; its full sequence is Ubiquilin-2 (624 aa).

2 disordered regions span residues 1 to 32 and 106 to 141; these read MAEN…EPKI and NRPQ…TNSN. Residue alanine 2 is modified to N-acetylalanine. Residues 15 to 32 are compositionally biased toward low complexity; that stretch reads RGPAAAQGSAAAPAEPKI. The Ubiquitin-like domain occupies 33–107; the sequence is IKVTVKTPKE…VHLVIKSQNR (75 aa). Polar residues predominate over residues 106-115; it reads NRPQGQSTQP. The segment covering 116–141 has biased composition (low complexity); the sequence is SNAAGTNTTSASTPRSNSTPISTNSN. STI1 domains follow at residues 178-206 and 208-247; these read SPEM…QLIM and NPQM…MQEM. A disordered region spans residues 287–349; that stretch reads FGGNPFASVG…SGSGNSSSNA (63 aa). Residues 294–304 show a composition bias toward low complexity; sequence SVGSSSSSGEG. Pro residues predominate over residues 316–325; it reads LPNPWAPPPA. Over residues 326–349 the composition is skewed to low complexity; it reads TQSSATTSTTTSTGSGSGNSSSNA. STI1 domains follow at residues 379 to 426 and 430 to 462; these read NPQL…QEQM and LPAF…QQGL. A run of 12 repeats spans residues 491 to 493, 494 to 496, 497 to 499, 500 to 502, 503 to 505, 506 to 508, 509 to 511, 512 to 514, 515 to 517, 518 to 520, 521 to 523, and 524 to 526. Residues 491–526 are 12 X 3 AA tandem repeats of P-X-X; that stretch reads PVGPVTPIGPIGPIVPFTPIGPIGPIGPTGPAAPPG. Residues 512–556 form a disordered region; that stretch reads PIGPIGPTGPAAPPGSTGSGGPTGPTVSSAAPSETTSPTSESGPN. A compositionally biased stretch (low complexity) spans 535–553; the sequence is GPTVSSAAPSETTSPTSES. One can recognise a UBA domain in the interval 581-621; the sequence is RFQQQLEQLNAMGFLNREANLQALIATGGDINAAIERLLGS.

Homodimer. Forms heterodimer with UBQLN1. Binds UBE3A and BTRC. Interacts with the 19S proteasome subunit. Interacts with C9orf72. Interacts with HNRNPA1 and HNRNPU. Found in a complex with UBQLN1 and MAP1LC3A/B/C. Interacts with EPS15, EPN1 and EPN2. Interacts with HERPUD1. Interacts with RAD23A. Interacts with TARDBP. Interacts (via C-terminus) with FAF2 (via N-terminus). Interacts with UBQLN4. Binds CD47. Post-translationally, degraded during macroautophagy.

The protein localises to the cytoplasm. It localises to the nucleus. The protein resides in the membrane. It is found in the cytoplasmic vesicle. Its subcellular location is the autophagosome. In terms of biological role, plays an important role in the regulation of different protein degradation mechanisms and pathways including ubiquitin-proteasome system (UPS), autophagy and the endoplasmic reticulum-associated protein degradation (ERAD) pathway. Mediates the proteasomal targeting of misfolded or accumulated proteins for degradation by binding (via UBA domain) to their polyubiquitin chains and by interacting (via ubiquitin-like domain) with the subunits of the proteasome. Plays a role in the ERAD pathway via its interaction with ER-localized proteins FAF2/UBXD8 and HERPUD1 and may form a link between the polyubiquitinated ERAD substrates and the proteasome. Involved in the regulation of macroautophagy and autophagosome formation; required for maturation of autophagy-related protein LC3 from the cytosolic form LC3-I to the membrane-bound form LC3-II and may assist in the maturation of autophagosomes to autolysosomes by mediating autophagosome-lysosome fusion. Negatively regulates the endocytosis of GPCR receptors: AVPR2 and ADRB2, by specifically reducing the rate at which receptor-arrestin complexes concentrate in clathrin-coated pits (CCPs). This Homo sapiens (Human) protein is Ubiquilin-2 (UBQLN2).